A 278-amino-acid polypeptide reads, in one-letter code: Protein canopy homolog 3 (278 aa).

The signal sequence occupies residues 1 to 30 (MDSMPEPASRCLLLLPLLLLLLLLLPAPEL). The region spanning 47–271 (SKCEVCKYVA…EGIQKASPLT (225 aa)) is the Saposin B-type domain. Disulfide bonds link Cys49-Cys206, Cys52-Cys194, and Cys104-Cys166. An N-linked (GlcNAc...) asparagine glycan is attached at Asn153. Positions 153 to 179 (NETSAEVADLKKQCDVLVEEFEEVIED) form a coiled coil. Positions 215–278 (KGDTAALGGK…PLTHSPPDEL (64 aa)) are disordered. The segment covering 233-243 (AKAAGGRSSSS) has biased composition (low complexity).

It belongs to the canopy family. As to quaternary structure, interacts with HSP90B1; this interaction is disrupted in the presence of ATP. Interacts with TLR1, TLR2, TLR4 and TLR9. Strongest interaction with TLR4.

The protein localises to the endoplasmic reticulum. In terms of biological role, toll-like receptor (TLR)-specific co-chaperone for HSP90B1. Required for proper TLR folding, except that of TLR3, and hence controls TLR exit from the endoplasmic reticulum. Consequently, required for both innate and adaptive immune responses. The chain is Protein canopy homolog 3 (CNPY3) from Homo sapiens (Human).